A 241-amino-acid chain; its full sequence is Sugar fermentation stimulation protein homolog (241 aa).

Belongs to the SfsA family.

This is Sugar fermentation stimulation protein homolog from Trichormus variabilis (strain ATCC 29413 / PCC 7937) (Anabaena variabilis).